Consider the following 516-residue polypeptide: Cytochrome P450 1A2 (516 aa).

Residue Ser69 is glycosylated (O-linked (GlcNAc) serine). Substrate is bound at residue Phe226. Heme is bound at residue Cys458.

It belongs to the cytochrome P450 family. Interacts with PGRMC1; the interaction requires PGRMC1 homodimerization. Heme serves as cofactor.

It is found in the endoplasmic reticulum membrane. It localises to the microsome membrane. The enzyme catalyses an organic molecule + reduced [NADPH--hemoprotein reductase] + O2 = an alcohol + oxidized [NADPH--hemoprotein reductase] + H2O + H(+). It catalyses the reaction 17beta-estradiol + reduced [NADPH--hemoprotein reductase] + O2 = 2-hydroxy-17beta-estradiol + oxidized [NADPH--hemoprotein reductase] + H2O + H(+). The catalysed reaction is 17beta-estradiol + reduced [NADPH--hemoprotein reductase] + O2 = 4-hydroxy-17beta-estradiol + oxidized [NADPH--hemoprotein reductase] + H2O + H(+). It carries out the reaction estrone + reduced [NADPH--hemoprotein reductase] + O2 = 2-hydroxyestrone + oxidized [NADPH--hemoprotein reductase] + H2O + H(+). The enzyme catalyses estrone + reduced [NADPH--hemoprotein reductase] + O2 = 4-hydroxyestrone + oxidized [NADPH--hemoprotein reductase] + H2O + H(+). It catalyses the reaction cholesterol + reduced [NADPH--hemoprotein reductase] + O2 = 25-hydroxycholesterol + oxidized [NADPH--hemoprotein reductase] + H2O + H(+). The catalysed reaction is all-trans-retinol + reduced [NADPH--hemoprotein reductase] + O2 = all-trans-retinal + oxidized [NADPH--hemoprotein reductase] + 2 H2O + H(+). It carries out the reaction all-trans-retinal + reduced [NADPH--hemoprotein reductase] + O2 = all-trans-retinoate + oxidized [NADPH--hemoprotein reductase] + H2O + 2 H(+). The enzyme catalyses (5Z,8Z,11Z,14Z)-eicosatetraenoate + reduced [NADPH--hemoprotein reductase] + O2 = (14R,15S)-epoxy-(5Z,8Z,11Z)-eicosatrienoate + oxidized [NADPH--hemoprotein reductase] + H2O + H(+). It catalyses the reaction (5Z,8Z,11Z,14Z)-eicosatetraenoate + reduced [NADPH--hemoprotein reductase] + O2 = (14S,15R)-epoxy-(5Z,8Z,11Z)-eicosatrienoate + oxidized [NADPH--hemoprotein reductase] + H2O + H(+). The catalysed reaction is (5Z,8Z,11Z,14Z,17Z)-eicosapentaenoate + reduced [NADPH--hemoprotein reductase] + O2 = (17R,18S)-epoxy-(5Z,8Z,11Z,14Z)-eicosatetraenoate + oxidized [NADPH--hemoprotein reductase] + H2O + H(+). It carries out the reaction (4Z,7Z,10Z,13Z,16Z,19Z)-docosahexaenoate + reduced [NADPH--hemoprotein reductase] + O2 = (19R,20S)-epoxy-(4Z,7Z,10Z,13Z,16Z)-docosapentaenoate + oxidized [NADPH--hemoprotein reductase] + H2O + H(+). The enzyme catalyses (5S)-hydroperoxy-(6E,8Z,11Z,14Z)-eicosatetraenoate = 5-oxo-(6E,8Z,11Z,14Z)-eicosatetraenoate + H2O. It catalyses the reaction (12S)-hydroperoxy-(5Z,8Z,10E,14Z)-eicosatetraenoate = 12-oxo-(5Z,8Z,10E,14Z)-eicosatetraenoate + H2O. The catalysed reaction is (15S)-hydroperoxy-(5Z,8Z,11Z,13E)-eicosatetraenoate = 15-oxo-(5Z,8Z,11Z,13E)-eicosatetraenoate + H2O. It carries out the reaction (13S)-hydroperoxy-(9Z,11E)-octadecadienoate = 13-oxo-(9Z,11E)-octadecadienoate + H2O. The enzyme catalyses (5Z,8Z,11Z,14Z)-eicosatetraenoate + reduced [NADPH--hemoprotein reductase] + O2 = 13-hydroxy-(5Z,8Z,11Z,14Z)-eicosatetraenoate + oxidized [NADPH--hemoprotein reductase] + H2O + H(+). It catalyses the reaction (5Z,8Z,11Z,14Z)-eicosatetraenoate + reduced [NADPH--hemoprotein reductase] + O2 = 19-hydroxy-(5Z,8Z,11Z,14Z)-eicosatetraenoate + oxidized [NADPH--hemoprotein reductase] + H2O + H(+). The catalysed reaction is (9Z,12Z)-octadecadienoate + reduced [NADPH--hemoprotein reductase] + O2 = 11-hydroxy-(9Z,12Z)-octadecadienoate + oxidized [NADPH--hemoprotein reductase] + H2O + H(+). It participates in cofactor metabolism; retinol metabolism. Its pathway is steroid metabolism; cholesterol metabolism. It functions in the pathway lipid metabolism; arachidonate metabolism. In terms of biological role, a cytochrome P450 monooxygenase involved in the metabolism of various endogenous substrates, including fatty acids, steroid hormones and vitamins. Mechanistically, uses molecular oxygen inserting one oxygen atom into a substrate, and reducing the second into a water molecule, with two electrons provided by NADPH via cytochrome P450 reductase (NADPH--hemoprotein reductase). Catalyzes the hydroxylation of carbon-hydrogen bonds. Exhibits high catalytic activity for the formation of hydroxyestrogens from estrone (E1) and 17beta-estradiol (E2), namely 2-hydroxy E1 and E2. Metabolizes cholesterol toward 25-hydroxycholesterol, a physiological regulator of cellular cholesterol homeostasis. May act as a major enzyme for all-trans retinoic acid biosynthesis in the liver. Catalyzes two successive oxidative transformation of all-trans retinol to all-trans retinal and then to the active form all-trans retinoic acid. Primarily catalyzes stereoselective epoxidation of the last double bond of polyunsaturated fatty acids (PUFA), displaying a strong preference for the (R,S) stereoisomer. Catalyzes bisallylic hydroxylation and omega-1 hydroxylation of PUFA. May also participate in eicosanoids metabolism by converting hydroperoxide species into oxo metabolites (lipoxygenase-like reaction, NADPH-independent). Plays a role in the oxidative metabolism of xenobiotics. Catalyzes the N-hydroxylation of heterocyclic amines and the O-deethylation of phenacetin. Metabolizes caffeine via N3-demethylation. This chain is Cytochrome P450 1A2 (CYP1A2), found in Pongo abelii (Sumatran orangutan).